The sequence spans 131 residues: Class I hydrophobin 9 (131 aa).

An N-terminal signal peptide occupies residues 1-23; sequence MFARRAISIFAFMLVALSIFAAA. Disulfide bonds link Cys52/Cys112, Cys59/Cys106, Cys60/Cys93, and Cys113/Cys126. Asn53 carries an N-linked (GlcNAc...) asparagine glycan. Asn115 carries N-linked (GlcNAc...) asparagine glycosylation.

This sequence belongs to the fungal hydrophobin family. Self-assembles to form functional amyloid fibrils called rodlets. Self-assembly into fibrillar rodlets occurs spontaneously at hydrophobic:hydrophilic interfaces and the rodlets further associate laterally to form amphipathic monolayers.

Its subcellular location is the secreted. The protein resides in the cell wall. Functionally, aerial growth, conidiation, and dispersal of filamentous fungi in the environment rely upon a capability of their secreting small amphipathic proteins called hydrophobins (HPBs) with low sequence identity. Class I can self-assemble into an outermost layer of rodlet bundles on aerial cell surfaces, conferring cellular hydrophobicity that supports fungal growth, development and dispersal; whereas Class II form highly ordered films at water-air interfaces through intermolecular interactions but contribute nothing to the rodlet structure. This chain is Class I hydrophobin 9, found in Flammulina velutipes (Agaricus velutipes).